Reading from the N-terminus, the 557-residue chain is Eukaryotic translation initiation factor 3 subunit D-2 (557 aa).

An RNA gate region spans residues 292 to 306 (QFDMLTVNETALEPP). The disordered stretch occupies residues 533-557 (FDSDNNDGEETSDDRPFLNSKDNKL). The span at 545-557 (DDRPFLNSKDNKL) shows a compositional bias: basic and acidic residues.

The protein belongs to the eIF-3 subunit D family. As to quaternary structure, component of the eukaryotic translation initiation factor 3 (eIF-3) complex. The eIF-3 complex interacts with pix.

It localises to the cytoplasm. Its function is as follows. mRNA cap-binding component of the eukaryotic translation initiation factor 3 (eIF-3) complex, which is involved in protein synthesis of a specialized repertoire of mRNAs and, together with other initiation factors, stimulates binding of mRNA and methionyl-tRNAi to the 40S ribosome. The eIF-3 complex specifically targets and initiates translation of a subset of mRNAs involved in cell proliferation. In the eIF-3 complex, eif3d specifically recognizes and binds the 7-methylguanosine cap of a subset of mRNAs. This Drosophila grimshawi (Hawaiian fruit fly) protein is Eukaryotic translation initiation factor 3 subunit D-2.